Here is a 668-residue protein sequence, read N- to C-terminus: MAP kinase kinase PBS2 (668 aa).

A compositionally biased stretch (basic and acidic residues) spans Met1–Gly15. 3 disordered regions span residues Met1–Tyr43, Arg61–Lys120, and Asn181–Gly313. Composition is skewed to polar residues over residues Lys16 to Tyr43, Ser68 to Val91, and Ser104 to Lys120. Ser68 is subject to Phosphoserine. The span at Ala239–Ser250 shows a compositional bias: low complexity. Ser269 carries the phosphoserine modification. Over residues Asn270–Thr300 the composition is skewed to polar residues. Residues Gly301 to Gly310 show a composition bias toward low complexity. Residues Leu360 to Leu623 enclose the Protein kinase domain. Residues Leu366 to Val374 and Lys389 contribute to the ATP site. Asp485 acts as the Proton acceptor in catalysis. Ser514 is modified (phosphoserine). Thr518 bears the Phosphothreonine mark.

Belongs to the protein kinase superfamily. STE Ser/Thr protein kinase family. MAP kinase kinase subfamily. In terms of assembly, interacts with NBP2, PTC1, SHO1 and STE11. Post-translationally, activated by phosphorylation by SSK2 or SSK22. Ser/Thr phosphorylation is also necessary for SHO1-mediated activation.

The protein resides in the cytoplasm. It carries out the reaction L-seryl-[protein] + ATP = O-phospho-L-seryl-[protein] + ADP + H(+). The enzyme catalyses L-threonyl-[protein] + ATP = O-phospho-L-threonyl-[protein] + ADP + H(+). It catalyses the reaction L-tyrosyl-[protein] + ATP = O-phospho-L-tyrosyl-[protein] + ADP + H(+). Its function is as follows. Kinase involved in a signal transduction pathway that is activated by changes in the osmolarity of the extracellular environment. Activates the MAP kinase HOG1 by concomitant phosphorylation at 'Thr-174' and 'Tyr-176'. The chain is MAP kinase kinase PBS2 (PBS2) from Saccharomyces cerevisiae (strain ATCC 204508 / S288c) (Baker's yeast).